A 254-amino-acid polypeptide reads, in one-letter code: Alcohol dehydrogenase 2 (254 aa).

10–33 (FVAGLGGIGFDTSREIVKSGPKNL) lines the NAD(+) pocket. Ser138 contacts substrate. Tyr151 serves as the catalytic Proton acceptor.

It belongs to the short-chain dehydrogenases/reductases (SDR) family. Homodimer.

The catalysed reaction is a primary alcohol + NAD(+) = an aldehyde + NADH + H(+). The enzyme catalyses a secondary alcohol + NAD(+) = a ketone + NADH + H(+). The polypeptide is Alcohol dehydrogenase 2 (Adh2) (Drosophila mulleri (Fruit fly)).